Consider the following 283-residue polypeptide: MKIKKKYCGHVIIVGKANVGKSTLLNNIIGKKISIVSRKKNTTQSNITGIKTEDNYQSIYIDTPGVVFDKNNNQMKHHKNNFYQTTQIATLIIFIIDRIDWTIHDEIILNEIKKTKIPILIIINKIDKISNKIILLPFINFLKKKIDFIEILPISAKKISNLILLKNIIKSYLPENCHIYPECYVTTNSDFFTVSEIIREQLILFLGDELPSIIKVEIESFKKKEKIALYIKAIIWVKNVRQKSIVIGHNGEKIKKISMISRNNIEKKFYIKTHLVLWVKDKN.

The 169-residue stretch at 7-175 folds into the Era-type G domain; sequence YCGHVIIVGK…KNIIKSYLPE (169 aa). Positions 15–22 are G1; the sequence is GKANVGKS. Residue 15–22 participates in GTP binding; it reads GKANVGKS. Positions 41 to 45 are G2; it reads NTTQS. Positions 62-65 are G3; that stretch reads DTPG. GTP contacts are provided by residues 62–66 and 124–127; these read DTPGV and NKID. The G4 stretch occupies residues 124–127; the sequence is NKID. Positions 154 to 156 are G5; the sequence is ISA. The KH type-2 domain maps to 198–283; the sequence is IREQLILFLG…HLVLWVKDKN (86 aa).

The protein belongs to the TRAFAC class TrmE-Era-EngA-EngB-Septin-like GTPase superfamily. Era GTPase family. In terms of assembly, monomer.

It localises to the cytoplasm. It is found in the cell membrane. Functionally, an essential GTPase that binds both GDP and GTP, with rapid nucleotide exchange. Plays a role in 16S rRNA processing and 30S ribosomal subunit biogenesis and possibly also in cell cycle regulation and energy metabolism. This is GTPase Era from Buchnera aphidicola subsp. Acyrthosiphon pisum (strain Tuc7).